Reading from the N-terminus, the 200-residue chain is Cytochrome c biogenesis ATP-binding export protein CcmA (200 aa).

The 199-residue stretch at Leu-2–Leu-200 folds into the ABC transporter domain. Gly-34–Thr-41 lines the ATP pocket.

It belongs to the ABC transporter superfamily. CcmA exporter (TC 3.A.1.107) family. In terms of assembly, the complex is composed of two ATP-binding proteins (CcmA) and two transmembrane proteins (CcmB).

Its subcellular location is the cell inner membrane. The enzyme catalyses heme b(in) + ATP + H2O = heme b(out) + ADP + phosphate + H(+). In terms of biological role, part of the ABC transporter complex CcmAB involved in the biogenesis of c-type cytochromes; once thought to export heme, this seems not to be the case, but its exact role is uncertain. Responsible for energy coupling to the transport system. This is Cytochrome c biogenesis ATP-binding export protein CcmA from Legionella pneumophila.